The chain runs to 227 residues: Brain acid soluble protein 1 (227 aa).

A compositionally biased stretch (basic residues) spans 1–11; it reads MGGKLSKKKKG. The tract at residues 1–227 is disordered; sequence MGGKLSKKKK…NSDQTVTVKE (227 aa). The N-myristoyl glycine moiety is linked to residue Gly2. Residues 15-27 show a composition bias toward basic and acidic residues; sequence NDEKAKEKDKKAE. Lys25 participates in a covalent cross-link: Glycyl lysine isopeptide (Lys-Gly) (interchain with G-Cter in SUMO2). 2 positions are modified to phosphothreonine: Thr31 and Thr36. Ser40 is subject to Phosphoserine. Over residues 49 to 105 the composition is skewed to basic and acidic residues; the sequence is AEAKEGKEKPDQDAEGKAEEKEGEKDAAAAKEEAPKAEPEKTEGAAEAKAEPPKAPE. Glycyl lysine isopeptide (Lys-Gly) (interchain with G-Cter in SUMO2) cross-links involve residues Lys84 and Lys97. Residues 106 to 139 are compositionally biased toward low complexity; that stretch reads QEQAAPGPAAGGEAPKAAEAAAAPAESAAPAAGE. The span at 140–152 shows a compositional bias: basic and acidic residues; that stretch reads EPSKEEGEPKKTE. Lys163 is covalently cross-linked (Glycyl lysine isopeptide (Lys-Gly) (interchain with G-Cter in SUMO2)). Phosphoserine occurs at positions 164, 170, 172, 176, and 195. The segment covering 173-185 has biased composition (polar residues); it reads KPGSSEAAPSSKE. Thr196 carries the phosphothreonine modification. Residues Ser205 and Ser219 each carry the phosphoserine modification. Over residues 218-227 the composition is skewed to polar residues; sequence NSDQTVTVKE.

In terms of tissue distribution, brain.

The protein resides in the cell membrane. It localises to the cell projection. It is found in the growth cone. The protein is Brain acid soluble protein 1 (BASP1) of Homo sapiens (Human).